A 130-amino-acid polypeptide reads, in one-letter code: MWRNASMNHSKRNDANDFDSMDEWLRQFFEDPFAWYDETLPIDLYETSQQYIIEADLTFLQPTQVTVTLSGCEFILTVKSSGQTFEKQMMLPFYFNDKNIQVECENQILTVAVNKETEDGSSFSLQFPLS.

In terms of biological role, involved in spore outer coat assembly. May be part of a cross-linked insoluble skeleton that surrounds the spore, serves as a matrix for the assembly of additional outer coat material, and confers structural stability to the final structure. The sequence is that of Spore coat protein M (cotM) from Bacillus subtilis (strain 168).